The chain runs to 458 residues: KAT8 regulatory NSL complex subunit 2 (458 aa).

Residue Lys-78 forms a Glycyl lysine isopeptide (Lys-Gly) (interchain with G-Cter in SUMO2) linkage. Positions 126–182 (ELGSQTPESSRSEASRILDEDSWSDGDQEPITVDQTWRGDPDSEADSIDSDQEDPLK) are disordered. Position 131 is a phosphothreonine (Thr-131). Residues 135 to 144 (SRSEASRILD) are compositionally biased toward basic and acidic residues. Phosphoserine occurs at positions 147, 149, 168, 172, and 175. A compositionally biased stretch (acidic residues) spans 167–178 (DSEADSIDSDQE). The interval 308 to 364 (DVRCSNQSLPMTRHCLTHICQDTNQVLFKCCQGSEEVPCNKPVPVSLSEDPCCPLHF) is required for interaction with other NSL complex members. A disordered region spans residues 419-458 (QMAGDGCRSQGPRNSEKAPAPLPQSGIATANGKPEPTSVS).

As to quaternary structure, component of the NSL complex at least composed of KAT8/MOF, KANSL1, KANSL2, KANSL3, MCRS1, PHF20, OGT1/OGT, WDR5 and HCFC1.

It is found in the nucleus. Its subcellular location is the mitochondrion. In terms of biological role, non-catalytic component of the NSL histone acetyltransferase complex, a multiprotein complex that mediates histone H4 acetylation at 'Lys-5'- and 'Lys-8' (H4K5ac and H4K8ac) at transcription start sites and promotes transcription initiation. Required for NSL complex stability and for transcription of intraciliary transport genes in both ciliated and non-ciliated cells by regulating histone H4 acetylation at 'Lys-5'- and 'Lys-12' (H4K5ac and H4K12ac). This is necessary for cilium assembly in ciliated cells and for organization of the microtubule cytoskeleton in non-ciliated cells. Required within the NSL complex to maintain nuclear architecture stability by promoting KAT8-mediated acetylation of lamin LMNA. The sequence is that of KAT8 regulatory NSL complex subunit 2 (KANSL2) from Bos taurus (Bovine).